The chain runs to 310 residues: MKMKVLEVVGLAISIWLMLTPPASSNIVFDVENATPETYSNFLTSLREAVKDKKLTCHGMIMATTLTEQPKYVLVDLKFGSGTFTLAIRRGNLYLEGYSDIYNGKCRYRIFKDSESDAQETVCPGDKSKPGTQNNIPYEKSYKGMESKGGARTKLGLGKITLKSRMGKIYGKDATDQKQYQKNEAEFLLIAVQMVTEASRFKYIENKVKAKFDDANGYQPDPKAISLEKNWDSVSKVIAKVGTSGDSTVTLPGDLKDENNKPWTTATMNDLKNDIMALLTHVTCKVKSSMFPEIMSYYYRTSISNLGEFE.

Positions 1-25 are cleaved as a signal peptide; the sequence is MKMKVLEVVGLAISIWLMLTPPASS. 2 disulfide bridges follow: Cys57–Cys284 and Cys106–Cys123. Tyr94 is an active-site residue. Catalysis depends on residues Tyr142, Glu197, and Arg200.

It belongs to the ribosome-inactivating protein family. Type 1 RIP subfamily. As to expression, PAP-II is expressed in early summer leaves (at protein level). PAP-III is expressed in late summer leaves (at protein level).

The catalysed reaction is Endohydrolysis of the N-glycosidic bond at one specific adenosine on the 28S rRNA.. Possesses antiviral potency. Inhibits viral infection of plants (tobacco mosaic virus). Inhibits protein synthesis in both prokaryotes and eukaryotes. In Phytolacca americana (American pokeweed), this protein is Antiviral protein II/III (PAP2).